An 840-amino-acid chain; its full sequence is Protein translocase subunit SecA (840 aa).

ATP-binding positions include Gln85, Gly103 to Thr107, and Asp492. The disordered stretch occupies residues Gln787–Leu822. Basic and acidic residues predominate over residues Asp802–Arg819. 4 residues coordinate Zn(2+): Cys823, Cys825, Cys834, and Cys835.

It belongs to the SecA family. As to quaternary structure, monomer and homodimer. Part of the essential Sec protein translocation apparatus which comprises SecA, SecYEG and auxiliary proteins SecDF. Other proteins may also be involved. Zn(2+) serves as cofactor.

Its subcellular location is the cell membrane. The protein resides in the cytoplasm. The enzyme catalyses ATP + H2O + cellular proteinSide 1 = ADP + phosphate + cellular proteinSide 2.. In terms of biological role, part of the Sec protein translocase complex. Interacts with the SecYEG preprotein conducting channel. Has a central role in coupling the hydrolysis of ATP to the transfer of proteins into and across the cell membrane, serving as an ATP-driven molecular motor driving the stepwise translocation of polypeptide chains across the membrane. This Clostridium perfringens (strain ATCC 13124 / DSM 756 / JCM 1290 / NCIMB 6125 / NCTC 8237 / Type A) protein is Protein translocase subunit SecA.